The primary structure comprises 173 residues: MDVTIQHPWFKRALGPFYPSRLFDQFFGEGLFEYDLLPFLSSTISPYYRQSLFRTVLDSGISEVRSDRDQFVILLDVKHFSPEDLTVKVQDDFVEIHGKHNERQDDHGYISREFHRRYRLPSNVDQSALSCSLSADGMLTFCGPKIQSGMDASHSERAIPVSREEKPSSAPSS.

M1 is modified (N-acetylmethionine). Residues 1 to 63 (MDVTIQHPWF…RTVLDSGISE (63 aa)) are required for complex formation with BFSP1 and BFSP2. Q6 is modified (deamidated glutamine; partial). The residue at position 45 (S45) is a Phosphoserine. Deamidated glutamine; partial occurs at positions 50 and 90. The 111-residue stretch at 52–162 (LFRTVLDSGI…SHSERAIPVS (111 aa)) folds into the sHSP domain. The residue at position 99 (K99) is an N6-acetyllysine. Zn(2+) is bound at residue H100. N101 carries the deamidated asparagine; partial modification. Positions 102 and 107 each coordinate Zn(2+). S122 bears the Phosphoserine mark. Position 123 is a deamidated asparagine; partial (N123). C131 and C142 are oxidised to a cystine. Q147 is subject to Deamidated glutamine; partial. The segment at 149-173 (GMDASHSERAIPVSREEKPSSAPSS) is disordered. Basic and acidic residues predominate over residues 153-167 (SHSERAIPVSREEKP). H154 is a binding site for Zn(2+). Residue S162 is glycosylated (O-linked (GlcNAc) serine).

This sequence belongs to the small heat shock protein (HSP20) family. Heteromer composed of three CRYAA and one CRYAB subunits. Inter-subunit bridging via zinc ions enhances stability, which is crucial as there is no protein turn over in the lens. Can also form homodimers and homotetramers (dimers of dimers) which serve as the building blocks of homooligomers. Within homooligomers, the zinc-binding motif is created from residues of 3 different molecules. His-100 and Glu-102 from one molecule are ligands of the zinc ion, and His-107 and His-154 residues from additional molecules complete the site with tetrahedral coordination geometry. Part of a complex required for lens intermediate filament formation composed of BFSP1, BFSP2 and CRYAA. Post-translationally, undergoes age-dependent proteolytical cleavage at the C-terminus.

It is found in the cytoplasm. The protein resides in the nucleus. Contributes to the transparency and refractive index of the lens. In its oxidized form (absence of intramolecular disulfide bond), acts as a chaperone, preventing aggregation of various proteins under a wide range of stress conditions. Required for the correct formation of lens intermediate filaments as part of a complex composed of BFSP1, BFSP2 and CRYAA. The sequence is that of Alpha-crystallin A chain (CRYAA) from Loxodonta africana (African elephant).